Here is a 445-residue protein sequence, read N- to C-terminus: Xylose isomerase (445 aa).

Active-site residues include H99 and D102. Mg(2+) is bound by residues E230, E266, H269, D294, D305, D307, and D337.

Belongs to the xylose isomerase family. In terms of assembly, homotetramer. It depends on Mg(2+) as a cofactor.

It is found in the cytoplasm. The catalysed reaction is alpha-D-xylose = alpha-D-xylulofuranose. The polypeptide is Xylose isomerase (Geobacillus thermodenitrificans (strain NG80-2)).